The primary structure comprises 354 residues: MGIEPNILENKKRHIDICLNKNDVKSGCNFLRFVKLKHNALSDFNFSEIDIKEEIFGYNISMPVFISSMTGGGKEGNDFNKSLVKIANYLKIPIGLGSFKLLFKYPEYIRDFALKRYAHSIPLFANIGAVQIVEFGISRIVEMIKRLEVDAIIVHLNAGQELMNVNGDRNFKGIKESIAKLSNFISVPLIVKETGFGISPSDVKKLFQLGVSYIDLAGSGGTNWVLVEGMKGNNLNIASCFSDWGIPSIFTLLSINDSLKANIFASGGYETGMDIAKGIALGAKLIGVAAVVLRAFYDSGEDAVFSLFSDYEHVLKMSMFLSGSKSLSDFRNNKYFLSSYLLAEFGVFKQFYGT.

11–12 (KK) lines the substrate pocket. Residues serine 67, 68–70 (SMT), serine 98, and asparagine 126 each bind FMN. 98–100 (SFK) is a binding site for substrate. Glutamine 160 is a substrate binding site. Glutamate 161 serves as a coordination point for Mg(2+). Residues lysine 192, threonine 222, and 289–290 (AA) contribute to the FMN site.

It belongs to the IPP isomerase type 2 family. Homooctamer. Dimer of tetramers. FMN is required as a cofactor. NADPH serves as cofactor. It depends on Mg(2+) as a cofactor.

It localises to the cytoplasm. The catalysed reaction is isopentenyl diphosphate = dimethylallyl diphosphate. Functionally, involved in the biosynthesis of isoprenoids. Catalyzes the 1,3-allylic rearrangement of the homoallylic substrate isopentenyl (IPP) to its allylic isomer, dimethylallyl diphosphate (DMAPP). This is Isopentenyl-diphosphate delta-isomerase from Borreliella afzelii (strain PKo) (Borrelia afzelii).